We begin with the raw amino-acid sequence, 193 residues long: dTTP/UTP pyrophosphatase (193 aa).

The active-site Proton acceptor is the Asp-70.

The protein belongs to the Maf family. YhdE subfamily. Requires a divalent metal cation as cofactor.

It is found in the cytoplasm. The enzyme catalyses dTTP + H2O = dTMP + diphosphate + H(+). It carries out the reaction UTP + H2O = UMP + diphosphate + H(+). Functionally, nucleoside triphosphate pyrophosphatase that hydrolyzes dTTP and UTP. May have a dual role in cell division arrest and in preventing the incorporation of modified nucleotides into cellular nucleic acids. The protein is dTTP/UTP pyrophosphatase of Alcanivorax borkumensis (strain ATCC 700651 / DSM 11573 / NCIMB 13689 / SK2).